A 333-amino-acid polypeptide reads, in one-letter code: Fructose-1,6-bisphosphatase class 1 (333 aa).

Mg(2+) is bound by residues Glu-92, Asp-114, Leu-116, and Asp-117. Substrate-binding positions include 117 to 120 (DGSS) and Asn-209. Mg(2+) is bound at residue Glu-279.

The protein belongs to the FBPase class 1 family. As to quaternary structure, homotetramer. The cofactor is Mg(2+).

It is found in the cytoplasm. The enzyme catalyses beta-D-fructose 1,6-bisphosphate + H2O = beta-D-fructose 6-phosphate + phosphate. It functions in the pathway carbohydrate biosynthesis; gluconeogenesis. The polypeptide is Fructose-1,6-bisphosphatase class 1 (Alkalilimnicola ehrlichii (strain ATCC BAA-1101 / DSM 17681 / MLHE-1)).